The following is a 424-amino-acid chain: Putative fasciclin-like arabinogalactan protein 20 (424 aa).

Residues 46 to 66 form a helical membrane-spanning segment; the sequence is LLTTFFLIFFVLDIDLVATSM. The FAS1 1 domain occupies 56–194; sequence VLDIDLVATS…YVVIYGSDEF (139 aa). N153 and N160 each carry an N-linked (GlcNAc...) asparagine glycan. The segment covering 199–226 has biased composition (low complexity); the sequence is TKISDDSSSSSSIPSTTSSTGSIPIPSS. Residues 199-246 are disordered; the sequence is TKISDDSSSSSSIPSTTSSTGSIPIPSSATQTPPSPNIASDSTRNLPN. The segment covering 227 to 246 has biased composition (polar residues); it reads ATQTPPSPNIASDSTRNLPN. N-linked (GlcNAc...) asparagine glycans are attached at residues N246, N283, and N287. Positions 250 to 384 constitute an FAS1 2 domain; sequence PVNRFNIFES…IAVHGFNQMI (135 aa). Residues 405-424 are disordered; that stretch reads QEEEGVHGEYSSELGDYGLH.

It belongs to the fasciclin-like AGP family.

The protein localises to the membrane. Functionally, may be a cell surface adhesion protein. This Arabidopsis thaliana (Mouse-ear cress) protein is Putative fasciclin-like arabinogalactan protein 20 (FLA20).